Consider the following 37-residue polypeptide: Large ribosomal subunit protein bL36c (37 aa).

Belongs to the bacterial ribosomal protein bL36 family.

It is found in the plastid. The chain is Large ribosomal subunit protein bL36c from Aneura mirabilis (Parasitic liverwort).